We begin with the raw amino-acid sequence, 314 residues long: Nodulation protein D 1 (314 aa).

Positions 6–63 (LDLNLLVALDAVMTARNLTAAARKINLSQPAMSAAIARLRTYFRDELFTMRGRELVPT) constitute an HTH lysR-type domain. The H-T-H motif DNA-binding region spans 23-42 (LTAAARKINLSQPAMSAAIA).

The protein belongs to the LysR transcriptional regulatory family.

In terms of biological role, nodD regulates the expression of the nodABCFE genes which encode other nodulation proteins. NodD is also a negative regulator of its own expression. Binds flavonoids as inducers. The chain is Nodulation protein D 1 (nodD1) from Bradyrhizobium diazoefficiens (strain JCM 10833 / BCRC 13528 / IAM 13628 / NBRC 14792 / USDA 110).